A 256-amino-acid polypeptide reads, in one-letter code: MASGTTIQPSRPSLTSNDSAVLQALFDAESSPSSAVAIDPSLSPFPEYLHISASDHESLKARELSIIRSLQSDDVSMDTITSAIRDLDALITEHPTYPSAYVNRAQALRLHIEKTAEASTDPEEAIFTPGNTESASRLFSDLGQAISLCTPRSPADPVSTVQARILADSHTHRGYLLLKAARLKKNANGNEMVGGPDKLRDMGPDQLEEMASRDFFFGGRYGNKVAQQLAVQTNPYAKMCGAIVKEALRKEVEGVI.

The protein belongs to the TTC36 family.

It is found in the cytoplasm. Its function is as follows. Part of the L-tyrosine degradation gene cluster that mediates the biosynthesis of the brownish pigment pyomelanin as an alternative melanin. The 4-hydroxyphenylpyruvate dioxygenase hppD catalyzes the conversion of 4-hydroxyphenylpyruvate to homogentisic acid (HGA). The protein hmgX is crucial for this conversion and thus, probably functions as an accessory factor to mediate specific activity of hppD. The homogentisate 1,2-dioxygenase hmgA is then involved in the cleavage of the aromatic ring of HGA and its conversion to 4-maleylacetoacetate. When hmgA activity is lowered by the cell wall integrity (CWI) signaling pathway, HGA accumulates and leads to the production of pyomelanin through benzoquinone acetic acid after oxidation and polymerization. On the opposite, in non-stress conditions, both hppD and hmgA activities are balanced and HGA is degraded into 4-maleylacetoacetate. 4-maleylacetoacetate is further converted to 4-fumarylacetoacetate by the maleylacetoacetate isomerase maiA, which is degraded into fumarate and acetoacetate by the fumarylacetoacetase fahA. The protein is L-tyrosine degradation gene cluster protein hmgX of Aspergillus fumigatus (strain ATCC MYA-4609 / CBS 101355 / FGSC A1100 / Af293) (Neosartorya fumigata).